An 872-amino-acid polypeptide reads, in one-letter code: Chaperone protein ClpB 2 (872 aa).

The region spanning 6–148 (PNQFTEKAWE…KNIIKQVRGS (143 aa)) is the Clp R domain. Repeat regions lie at residues 9–73 (FTEK…IQRQ) and 85–148 (LGRS…VRGS). The segment at 161 to 342 (QSLEKYGRDL…RRFQQVYVDQ (182 aa)) is NBD1. 208 to 215 (GEPGVGKT) is an ATP binding site. Residues 343 to 551 (PSVEDTISIL…IAEIISKWTG (209 aa)) are linker. Positions 393–527 (IDLVDEAAAR…TERELSQTQG (135 aa)) form a coiled coil. The interval 561–772 (EKEKLLHLED…RIDEVIIFHS (212 aa)) is NBD2. Residue 611 to 618 (GPTGVGKT) coordinates ATP. The interval 773–872 (LDKKELRQIV…SRLPVEVFSS (100 aa)) is C-terminal.

This sequence belongs to the ClpA/ClpB family. Homohexamer. The oligomerization is ATP-dependent.

It localises to the cytoplasm. Functionally, part of a stress-induced multi-chaperone system, it is involved in the recovery of the cell from heat-induced damage, in cooperation with DnaK, DnaJ and GrpE. Acts before DnaK, in the processing of protein aggregates. Protein binding stimulates the ATPase activity; ATP hydrolysis unfolds the denatured protein aggregates, which probably helps expose new hydrophobic binding sites on the surface of ClpB-bound aggregates, contributing to the solubilization and refolding of denatured protein aggregates by DnaK. The polypeptide is Chaperone protein ClpB 2 (clpB2) (Nostoc sp. (strain PCC 7120 / SAG 25.82 / UTEX 2576)).